The following is a 341-amino-acid chain: DNA-directed RNA polymerase subunit alpha (341 aa).

The interval 1–226 (MLIAQRPTIT…ELFGLVRELN (226 aa)) is alpha N-terminal domain (alpha-NTD). The interval 241–341 (AALAADLALP…DQRYIETEQL (101 aa)) is alpha C-terminal domain (alpha-CTD).

Belongs to the RNA polymerase alpha chain family. Homodimer. The RNAP catalytic core consists of 2 alpha, 1 beta, 1 beta' and 1 omega subunit. When a sigma factor is associated with the core the holoenzyme is formed, which can initiate transcription.

The catalysed reaction is RNA(n) + a ribonucleoside 5'-triphosphate = RNA(n+1) + diphosphate. DNA-dependent RNA polymerase catalyzes the transcription of DNA into RNA using the four ribonucleoside triphosphates as substrates. The sequence is that of DNA-directed RNA polymerase subunit alpha from Acidothermus cellulolyticus (strain ATCC 43068 / DSM 8971 / 11B).